A 288-amino-acid chain; its full sequence is Probable endonuclease 4 (288 aa).

Zn(2+) contacts are provided by His-75, His-115, Glu-153, Asp-187, His-190, His-224, Asp-237, His-239, and Glu-269.

It belongs to the AP endonuclease 2 family. The cofactor is Zn(2+).

The enzyme catalyses Endonucleolytic cleavage to 5'-phosphooligonucleotide end-products.. Its function is as follows. Endonuclease IV plays a role in DNA repair. It cleaves phosphodiester bonds at apurinic or apyrimidinic (AP) sites, generating a 3'-hydroxyl group and a 5'-terminal sugar phosphate. The polypeptide is Probable endonuclease 4 (Chlamydia trachomatis serovar A (strain ATCC VR-571B / DSM 19440 / HAR-13)).